The chain runs to 185 residues: Bcl-2-modifying factor (185 aa).

The interval 1–28 (MEPPQCVEELEDDVFQSEDGEPGTQPGG) is disordered. A compositionally biased stretch (acidic residues) spans 8 to 21 (EELEDDVFQSEDGE). Residues 67-75 (DKATQTLSP) form an interaction with DLC2 region. The BH3 motif lies at 134 to 148 (IARKLQCIADQFHRL).

This sequence belongs to the Bcl-2 family. Interacts with MCL1, BCL2, BCL2L1/BCL-Xl, BCL2A1 and BCL2L2/BCL-w. Interacts with the myosin V actin motor complex through its binding to DLC2. In terms of tissue distribution, widely expressed with an abundant expression in pancreas, liver kidney and hematopoietic tissues.

In terms of biological role, may play a role in apoptosis. This chain is Bcl-2-modifying factor (Bmf), found in Mus musculus (Mouse).